A 120-amino-acid polypeptide reads, in one-letter code: MTGERIEKVKINDEFAKSHFLTTQWRETKRQRHYKMPVTEQGLRERIESAIPQVYHIIVTDLSYGCGQSFDIVVVSDFFQGKSKLMRSRAVNKAVKEELQEIHAFSCKCYTEEEWSKIVV.

The protein belongs to the BolA/IbaG family. In terms of assembly, interacts with FRA1, GRX3 and GRX4.

It localises to the cytoplasm. The protein localises to the nucleus. In terms of biological role, involved in the regulation of the iron regulon in response to decreased mitochondrial iron-sulfur cluster synthesis. May be involved in mitochondrial organization and biogenesis. The protein is BolA-like protein 2 (BOL2) of Saccharomyces cerevisiae (strain ATCC 204508 / S288c) (Baker's yeast).